A 225-amino-acid polypeptide reads, in one-letter code: MNSIEFTLLARRTQNSVISTTSNDLSNWSRLSSLWPLLYGTSCCFIEFASLIGSRFDFDRYGLVPRSSPRQADLILTAGTVTMKMAPSLVRLYEQMPEPKYVIAMGACTITGGMFSTDSYSTVRGVDKLIPVDVYLPGCPPKPEAIIDAITKLRKKISREIYEDRIRSQEENRCFTTNHKFHVGPSMHTGNYDPGLLYQLPSTSEIASETFFKYKSSVSAHELVN.

[4Fe-4S] cluster is bound by residues C43, C44, C108, and C139.

This sequence belongs to the complex I 20 kDa subunit family. NDH is composed of at least 16 different subunits, 5 of which are encoded in the nucleus. Requires [4Fe-4S] cluster as cofactor.

The protein resides in the plastid. It is found in the chloroplast thylakoid membrane. It catalyses the reaction a plastoquinone + NADH + (n+1) H(+)(in) = a plastoquinol + NAD(+) + n H(+)(out). The enzyme catalyses a plastoquinone + NADPH + (n+1) H(+)(in) = a plastoquinol + NADP(+) + n H(+)(out). Functionally, NDH shuttles electrons from NAD(P)H:plastoquinone, via FMN and iron-sulfur (Fe-S) centers, to quinones in the photosynthetic chain and possibly in a chloroplast respiratory chain. The immediate electron acceptor for the enzyme in this species is believed to be plastoquinone. Couples the redox reaction to proton translocation, and thus conserves the redox energy in a proton gradient. This Oenothera argillicola (Appalachian evening primrose) protein is NAD(P)H-quinone oxidoreductase subunit K, chloroplastic.